The sequence spans 137 residues: Acyl carrier protein 4, chloroplastic (137 aa).

The transit peptide at 1–48 (MASLSTTSLSFKAPSTTISQVLRKASSSQSVTFGRFTSSTKSLRLQIS) directs the protein to the chloroplast. The Carrier domain occupies 53 to 128 (AETVQKVSDI…EAADLIEDLV (76 aa)). The residue at position 88 (Ser88) is an O-(pantetheine 4'-phosphoryl)serine.

This sequence belongs to the acyl carrier protein (ACP) family. In terms of processing, 4'-phosphopantetheine is transferred from CoA to a specific serine of apo-ACP by acpS. This modification is essential for activity because fatty acids are bound in thioester linkage to the sulfhydryl of the prosthetic group.

It localises to the plastid. Its subcellular location is the chloroplast. Its function is as follows. Carrier of the growing fatty acid chain in fatty acid biosynthesis that plays a major role in the biosynthesis of fatty acids in leaves. Required for the biosynthesis of chloroplast photosynthetic membrane lipids such as monogalactosyldiacylglycerol, digalactosyldiacylglycerol and phosphatidylglycerol. Is essential for the biosynthesis of the cuticular wax and cutin polymers in leaves, and for the establishment of systemic acquired resistance (SAR). This is Acyl carrier protein 4, chloroplastic (ACP4) from Arabidopsis thaliana (Mouse-ear cress).